The primary structure comprises 716 residues: 1,4-alpha-glucan branching enzyme GlgB (716 aa).

Asp399 functions as the Nucleophile in the catalytic mechanism. Glu452 serves as the catalytic Proton donor.

It belongs to the glycosyl hydrolase 13 family. GlgB subfamily. As to quaternary structure, monomer.

The enzyme catalyses Transfers a segment of a (1-&gt;4)-alpha-D-glucan chain to a primary hydroxy group in a similar glucan chain.. It participates in glycan biosynthesis; glycogen biosynthesis. Catalyzes the formation of the alpha-1,6-glucosidic linkages in glycogen by scission of a 1,4-alpha-linked oligosaccharide from growing alpha-1,4-glucan chains and the subsequent attachment of the oligosaccharide to the alpha-1,6 position. This Rhodopseudomonas palustris (strain ATCC BAA-98 / CGA009) protein is 1,4-alpha-glucan branching enzyme GlgB.